The following is a 172-amino-acid chain: Translation initiation factor IF-3 (172 aa).

Belongs to the IF-3 family. As to quaternary structure, monomer.

It localises to the cytoplasm. IF-3 binds to the 30S ribosomal subunit and shifts the equilibrium between 70S ribosomes and their 50S and 30S subunits in favor of the free subunits, thus enhancing the availability of 30S subunits on which protein synthesis initiation begins. This chain is Translation initiation factor IF-3, found in Campylobacter curvus (strain 525.92).